Reading from the N-terminus, the 460-residue chain is Serine incorporator 5 (460 aa).

At 1–36 the chain is on the extracellular side; it reads MCTPCCVSQLACCCGSAACSLCCGCCPKIKQSTSTR. Residues 37 to 57 form a helical membrane-spanning segment; sequence FMYALFFMLVTVTCVIMMSPT. At 58-89 the chain is on the cytoplasmic side; that stretch reads VEMAMREHIPFYSQMCQQLNAGENCSTLVGYS. A helical transmembrane segment spans residues 90 to 110; that stretch reads AVYKVCFGMACFFFFFAVFTI. Residues 111–124 are Extracellular-facing; it reads RVQNSTGCRAAVHN. A glycan (N-linked (GlcNAc...) asparagine) is linked at asparagine 114. Residues 125-145 form a helical membrane-spanning segment; sequence GFWFFKFVALLACCAGGFFLP. Over 146-156 the chain is Cytoplasmic; the sequence is NQDQFLEVWRY. The helical transmembrane segment at 157 to 177 threads the bilayer; that stretch reads VGAAGGFLFIIIQLMLLVQFA. Topologically, residues 178 to 197 are extracellular; it reads HRWNQNWSSGATYNKLWYAA. An N-linked (GlcNAc...) asparagine glycan is attached at asparagine 183. A helical transmembrane segment spans residues 198-218; that stretch reads LALVTLVLFSVAVGGMVFMFM. Over 219–230 the chain is Cytoplasmic; the sequence is YYTHPEACFLNK. Residues 231–251 form a helical membrane-spanning segment; it reads IFLGVNGGLCFIVSLLAISPC. Residues 252 to 259 lie on the Extracellular side of the membrane; the sequence is IQTFQPTS. The helical transmembrane segment at 260-280 threads the bilayer; that stretch reads GLLQPAVITLYVMYLTFSALA. Topologically, residues 281-311 are cytoplasmic; the sequence is SKPIEMVEDEIKGNITVCVFPFKSGLKSDTN. Residues 312–332 traverse the membrane as a helical segment; sequence IVTGVGTAILFCCILYSCLIS. Residues 333–391 are Extracellular-facing; that stretch reads TTKRSSAALQVYRNDMPENERARCCFCWVDDTEDYDDEKTSGGQNVKYDERDGTVYSYC. Residues 392–412 form a helical membrane-spanning segment; sequence FFHFVFFLGSLYVMMTVTNWF. The Cytoplasmic portion of the chain corresponds to 413–433; the sequence is HYDNAKIERLLEGSWSVFWIK. The chain crosses the membrane as a helical span at residues 434–454; the sequence is MASSWVCLFFYMWTLVVPMLF. Residues 455–460 are Extracellular-facing; the sequence is PQRFQA.

This sequence belongs to the TDE1 family.

It localises to the cell membrane. The enzyme catalyses a 1,2-diacyl-sn-glycero-3-phospho-L-serine(in) = a 1,2-diacyl-sn-glycero-3-phospho-L-serine(out). It carries out the reaction a 1,2-diacyl-sn-glycero-3-phosphocholine(in) = a 1,2-diacyl-sn-glycero-3-phosphocholine(out). It catalyses the reaction a 1,2-diacyl-sn-glycero-3-phosphoethanolamine(in) = a 1,2-diacyl-sn-glycero-3-phosphoethanolamine(out). Functionally, restriction factor required to restrict infectivity of gammaretroviruses: acts by inhibiting an early step of viral infection. Impairs the penetration of the viral particle into the cytoplasm. Non-ATP-dependent, non-specific lipid transporter for phosphatidylserine, phosphatidylcholine, and phosphatidylethanolamine. Functions as a scramblase that flips lipids in both directions across the membrane. Phospholipid scrambling results in gammaretroviral surface exposure of phosphatidylserine and loss of membrane asymmetry, which leads to loss of infectivity. Enhances the incorporation of serine into phosphatidylserine and sphingolipids. This is Serine incorporator 5 (serinc5) from Danio rerio (Zebrafish).